A 188-amino-acid polypeptide reads, in one-letter code: Elongation factor P (188 aa).

Belongs to the elongation factor P family.

It localises to the cytoplasm. Its pathway is protein biosynthesis; polypeptide chain elongation. Functionally, involved in peptide bond synthesis. Stimulates efficient translation and peptide-bond synthesis on native or reconstituted 70S ribosomes in vitro. Probably functions indirectly by altering the affinity of the ribosome for aminoacyl-tRNA, thus increasing their reactivity as acceptors for peptidyl transferase. The chain is Elongation factor P from Anaplasma marginale (strain Florida).